We begin with the raw amino-acid sequence, 78 residues long: Acyl carrier protein (78 aa).

The region spanning 2–77 is the Carrier domain; the sequence is STIEESVKAI…AAIDFIQASQ (76 aa). S37 is modified (O-(pantetheine 4'-phosphoryl)serine).

This sequence belongs to the acyl carrier protein (ACP) family. In terms of processing, 4'-phosphopantetheine is transferred from CoA to a specific serine of apo-ACP by AcpS. This modification is essential for activity because fatty acids are bound in thioester linkage to the sulfhydryl of the prosthetic group.

It localises to the cytoplasm. It participates in lipid metabolism; fatty acid biosynthesis. Carrier of the growing fatty acid chain in fatty acid biosynthesis. This Sodalis glossinidius (strain morsitans) protein is Acyl carrier protein.